Here is a 417-residue protein sequence, read N- to C-terminus: Serpin H1 (417 aa).

The first 17 residues, Met-1–Ala-17, serve as a signal peptide directing secretion. Lys-93 carries the N6-succinyllysine modification. N-linked (GlcNAc...) asparagine glycans are attached at residues Asn-119 and Asn-124. Ser-140 carries the phosphoserine modification. Lys-206 is modified (N6-acetyllysine). Residue Lys-295 is modified to N6-succinyllysine. Lys-318 bears the N6-acetyllysine mark. Asn-394 is a glycosylation site (N-linked (GlcNAc...) asparagine). The Prevents secretion from ER motif lies at Arg-414–Leu-417.

It belongs to the serpin family.

It localises to the endoplasmic reticulum lumen. Functionally, binds specifically to collagen. Could be involved as a chaperone in the biosynthetic pathway of collagen. In Mus musculus (Mouse), this protein is Serpin H1 (Serpinh1).